We begin with the raw amino-acid sequence, 642 residues long: Threonine--tRNA ligase (642 aa).

The 61-residue stretch at 1 to 61 (MPVITLPDGS…ENDAQLSIIT (61 aa)) folds into the TGS domain. The tract at residues 243-534 (DHRKIGKQLD…LTEEFAGFFP (292 aa)) is catalytic. N6-acetyllysine is present on Lys-286. Zn(2+)-binding residues include Cys-334, His-385, and His-511.

The protein belongs to the class-II aminoacyl-tRNA synthetase family. Homodimer. Zn(2+) is required as a cofactor.

The protein resides in the cytoplasm. It catalyses the reaction tRNA(Thr) + L-threonine + ATP = L-threonyl-tRNA(Thr) + AMP + diphosphate + H(+). Functionally, catalyzes the attachment of threonine to tRNA(Thr) in a two-step reaction: L-threonine is first activated by ATP to form Thr-AMP and then transferred to the acceptor end of tRNA(Thr). Also edits incorrectly charged L-seryl-tRNA(Thr). This chain is Threonine--tRNA ligase, found in Shigella flexneri serotype 5b (strain 8401).